The following is a 37-amino-acid chain: Large ribosomal subunit protein bL36 (37 aa).

It belongs to the bacterial ribosomal protein bL36 family.

The sequence is that of Large ribosomal subunit protein bL36 from Shewanella baltica (strain OS223).